Reading from the N-terminus, the 170-residue chain is Acireductone dioxygenase (170 aa).

Fe(2+) contacts are provided by histidine 99, histidine 101, glutamate 105, and histidine 144. The Ni(2+) site is built by histidine 99, histidine 101, glutamate 105, and histidine 144.

This sequence belongs to the acireductone dioxygenase (ARD) family. Monomer. Fe(2+) serves as cofactor. It depends on Ni(2+) as a cofactor.

The enzyme catalyses 1,2-dihydroxy-5-(methylsulfanyl)pent-1-en-3-one + O2 = 3-(methylsulfanyl)propanoate + CO + formate + 2 H(+). It carries out the reaction 1,2-dihydroxy-5-(methylsulfanyl)pent-1-en-3-one + O2 = 4-methylsulfanyl-2-oxobutanoate + formate + 2 H(+). Its pathway is amino-acid biosynthesis; L-methionine biosynthesis via salvage pathway; L-methionine from S-methyl-5-thio-alpha-D-ribose 1-phosphate: step 5/6. Its function is as follows. Catalyzes 2 different reactions between oxygen and the acireductone 1,2-dihydroxy-3-keto-5-methylthiopentene (DHK-MTPene) depending upon the metal bound in the active site. Fe-containing acireductone dioxygenase (Fe-ARD) produces formate and 2-keto-4-methylthiobutyrate (KMTB), the alpha-ketoacid precursor of methionine in the methionine recycle pathway. Ni-containing acireductone dioxygenase (Ni-ARD) produces methylthiopropionate, carbon monoxide and formate, and does not lie on the methionine recycle pathway. In Bacillus thuringiensis subsp. konkukian (strain 97-27), this protein is Acireductone dioxygenase.